The chain runs to 20 residues: 44 kDa cell wall protein 2 (20 aa).

The protein localises to the secreted. Its subcellular location is the cell wall. This chain is 44 kDa cell wall protein 2, found in Solanum lycopersicum (Tomato).